Here is a 32-residue protein sequence, read N- to C-terminus: Protamine-2 (32 aa).

The segment at 1-32 (PRRRRSSSRPVRRRRARRVSRRRRRRGGRRRR) is disordered.

As to expression, testis.

The protein localises to the nucleus. It is found in the chromosome. Protamines substitute for histones in the chromatin of sperm during the haploid phase of spermatogenesis. They compact sperm DNA into a highly condensed, stable and inactive complex. This chain is Protamine-2, found in Oncorhynchus mykiss (Rainbow trout).